The following is a 549-amino-acid chain: Small ribosomal subunit protein bS1 (549 aa).

6 consecutive S1 motif domains span residues 21–87, 105–171, 192–260, 277–347, 364–434, and 451–512; these read GSIV…LSRE, KATV…VSRR, GSEV…LGLK, NSKL…LGLK, GDKV…LGIK, and GAVV…LSVK.

The protein belongs to the bacterial ribosomal protein bS1 family.

Functionally, binds mRNA; thus facilitating recognition of the initiation point. It is needed to translate mRNA with a short Shine-Dalgarno (SD) purine-rich sequence. This is Small ribosomal subunit protein bS1 (rpsA) from Haemophilus influenzae (strain ATCC 51907 / DSM 11121 / KW20 / Rd).